The sequence spans 85 residues: Putative defensin-like protein 79 (85 aa).

Positions 1–31 (MKSEKSADAYGTYFLLISTIFLLFIARQASS) are cleaved as a signal peptide. Disulfide bonds link Cys-37–Cys-69, Cys-44–Cys-60, Cys-47–Cys-67, and Cys-51–Cys-68.

Belongs to the DEFL family.

It localises to the secreted. In Arabidopsis thaliana (Mouse-ear cress), this protein is Putative defensin-like protein 79.